The following is a 215-amino-acid chain: Transcription elongation factor A protein-like 4 (215 aa).

N-acetylmethionine is present on Met1. Residues 1–133 form a disordered region; the sequence is MEKLYSENEG…RKAKRKTNKG (133 aa). Phosphoserine is present on residues Ser6, Ser88, and Ser102. Residues 25–102 show a composition bias toward basic and acidic residues; that stretch reads QDERKPEVTC…KPEIEGKPES (78 aa).

Belongs to the TFS-II family. TFA subfamily.

The protein resides in the nucleus. Its function is as follows. May be involved in transcriptional regulation. This chain is Transcription elongation factor A protein-like 4 (TCEAL4), found in Homo sapiens (Human).